Reading from the N-terminus, the 91-residue chain is MSDTKTAPAYDTPIGLTNPPIDELLERTSSKYALVIYAAKRARQINDYYNQLGDGILEYVGPLVEPGLQEKPLSVALREIHADLLEHSEGE.

The protein belongs to the RNA polymerase subunit omega family. As to quaternary structure, the RNAP catalytic core consists of 2 alpha, 1 beta, 1 beta' and 1 omega subunit. When a sigma factor is associated with the core the holoenzyme is formed, which can initiate transcription.

It carries out the reaction RNA(n) + a ribonucleoside 5'-triphosphate = RNA(n+1) + diphosphate. Promotes RNA polymerase assembly. Latches the N- and C-terminal regions of the beta' subunit thereby facilitating its interaction with the beta and alpha subunits. In Nocardia farcinica (strain IFM 10152), this protein is DNA-directed RNA polymerase subunit omega.